The primary structure comprises 101 residues: Small ribosomal subunit protein uS14 (101 aa).

This sequence belongs to the universal ribosomal protein uS14 family. As to quaternary structure, part of the 30S ribosomal subunit. Contacts proteins S3 and S10.

Functionally, binds 16S rRNA, required for the assembly of 30S particles and may also be responsible for determining the conformation of the 16S rRNA at the A site. This chain is Small ribosomal subunit protein uS14, found in Chlamydia caviae (strain ATCC VR-813 / DSM 19441 / 03DC25 / GPIC) (Chlamydophila caviae).